Consider the following 635-residue polypeptide: Biosynthetic arginine decarboxylase (635 aa).

The residue at position 101 (Lys101) is an N6-(pyridoxal phosphate)lysine. 284–294 serves as a coordination point for substrate; that stretch reads VDVGGGLGVDY.

The protein belongs to the Orn/Lys/Arg decarboxylase class-II family. SpeA subfamily. Mg(2+) serves as cofactor. Pyridoxal 5'-phosphate is required as a cofactor.

It carries out the reaction L-arginine + H(+) = agmatine + CO2. Its pathway is amine and polyamine biosynthesis; agmatine biosynthesis; agmatine from L-arginine: step 1/1. In terms of biological role, catalyzes the biosynthesis of agmatine from arginine. The protein is Biosynthetic arginine decarboxylase of Tolumonas auensis (strain DSM 9187 / NBRC 110442 / TA 4).